Consider the following 190-residue polypeptide: Protein GrpE (190 aa).

A compositionally biased stretch (polar residues) spans 1–11 (MSNQDEPQNSP). Residues 1-36 (MSNQDEPQNSPEEFAEDQQADVALEEASSDSSETAA) form a disordered region. The segment covering 13–28 (EFAEDQQADVALEEAS) has biased composition (acidic residues).

Belongs to the GrpE family. Homodimer.

The protein resides in the cytoplasm. Participates actively in the response to hyperosmotic and heat shock by preventing the aggregation of stress-denatured proteins, in association with DnaK and GrpE. It is the nucleotide exchange factor for DnaK and may function as a thermosensor. Unfolded proteins bind initially to DnaJ; upon interaction with the DnaJ-bound protein, DnaK hydrolyzes its bound ATP, resulting in the formation of a stable complex. GrpE releases ADP from DnaK; ATP binding to DnaK triggers the release of the substrate protein, thus completing the reaction cycle. Several rounds of ATP-dependent interactions between DnaJ, DnaK and GrpE are required for fully efficient folding. This is Protein GrpE from Teredinibacter turnerae (strain ATCC 39867 / T7901).